A 90-amino-acid polypeptide reads, in one-letter code: MATSAAAVQEDPATNFAKDQLRAIIERIERLEEEKKTISDDIRDVYAEAKGNGFDVKALRTIVRMRKQDANERAEQETILETYMQALGML.

The protein belongs to the UPF0335 family.

The protein is UPF0335 protein RPA4190 of Rhodopseudomonas palustris (strain ATCC BAA-98 / CGA009).